The following is a 47-amino-acid chain: Short neurotoxin D2A (47 aa).

2 cysteine pairs are disulfide-bonded: cysteine 3–cysteine 24 and cysteine 17–cysteine 39.

In terms of tissue distribution, expressed by the venom gland.

Its subcellular location is the secreted. The protein is Short neurotoxin D2A of Micrurus pyrrhocryptus (Coral snake).